The following is a 146-amino-acid chain: Ribosome maturation factor RimP (146 aa).

It belongs to the RimP family.

It is found in the cytoplasm. Its function is as follows. Required for maturation of 30S ribosomal subunits. The polypeptide is Ribosome maturation factor RimP (Helicobacter pylori (strain ATCC 700392 / 26695) (Campylobacter pylori)).